The chain runs to 194 residues: Probable GTP-binding protein EngB (194 aa).

The 172-residue stretch at 23-194 (DKMEFAFVGR…LNFMEEKLNN (172 aa)) folds into the EngB-type G domain. Residues 31–38 (GRSNVGKS), 58–62 (GRTQL), 76–79 (DLPG), 142–145 (TKID), and 173–175 (HSS) each bind GTP. Ser-38 and Thr-60 together coordinate Mg(2+).

This sequence belongs to the TRAFAC class TrmE-Era-EngA-EngB-Septin-like GTPase superfamily. EngB GTPase family. The cofactor is Mg(2+).

In terms of biological role, necessary for normal cell division and for the maintenance of normal septation. This Fusobacterium nucleatum subsp. nucleatum (strain ATCC 25586 / DSM 15643 / BCRC 10681 / CIP 101130 / JCM 8532 / KCTC 2640 / LMG 13131 / VPI 4355) protein is Probable GTP-binding protein EngB.